Here is a 338-residue protein sequence, read N- to C-terminus: tRNA N6-adenosine threonylcarbamoyltransferase (338 aa).

Histidine 110 and histidine 114 together coordinate Fe cation. Residues 132 to 136 (ILSGG), aspartate 165, glycine 178, and asparagine 274 contribute to the substrate site. Residue aspartate 298 participates in Fe cation binding.

It belongs to the KAE1 / TsaD family. Requires Fe(2+) as cofactor.

Its subcellular location is the cytoplasm. It catalyses the reaction L-threonylcarbamoyladenylate + adenosine(37) in tRNA = N(6)-L-threonylcarbamoyladenosine(37) in tRNA + AMP + H(+). Required for the formation of a threonylcarbamoyl group on adenosine at position 37 (t(6)A37) in tRNAs that read codons beginning with adenine. Is involved in the transfer of the threonylcarbamoyl moiety of threonylcarbamoyl-AMP (TC-AMP) to the N6 group of A37, together with TsaE and TsaB. TsaD likely plays a direct catalytic role in this reaction. The chain is tRNA N6-adenosine threonylcarbamoyltransferase from Borrelia hermsii (strain HS1 / DAH).